Here is a 302-residue protein sequence, read N- to C-terminus: Dihydroorotate dehydrogenase B (NAD(+)), catalytic subunit (302 aa).

FMN-binding positions include S20 and 44–45 (KG). Substrate is bound by residues K44 and 68–72 (NSVGL). 2 residues coordinate FMN: N98 and N125. N125 provides a ligand contact to substrate. The active-site Nucleophile is C128. Positions 163 and 189 each coordinate FMN. Position 190 to 191 (190 to 191 (NT)) interacts with substrate. FMN contacts are provided by residues G215, 241–242 (GG), and 263–264 (GT).

The protein belongs to the dihydroorotate dehydrogenase family. Type 1 subfamily. Heterotetramer of 2 PyrK and 2 PyrD type B subunits. FMN is required as a cofactor.

The protein localises to the cytoplasm. It catalyses the reaction (S)-dihydroorotate + NAD(+) = orotate + NADH + H(+). The protein operates within pyrimidine metabolism; UMP biosynthesis via de novo pathway; orotate from (S)-dihydroorotate (NAD(+) route): step 1/1. In terms of biological role, catalyzes the conversion of dihydroorotate to orotate with NAD(+) as electron acceptor. This chain is Dihydroorotate dehydrogenase B (NAD(+)), catalytic subunit (pyrD), found in Thermoanaerobacter sp. (strain X514).